The following is a 294-amino-acid chain: Cyclin-dependent kinase A-1 (294 aa).

The region spanning 4–287 (YEKEEKIGEG…ARQALEHEYF (284 aa)) is the Protein kinase domain. Residues 10 to 18 (IGEGTYGVV) and Lys33 contribute to the ATP site. At Thr14 the chain carries Phosphothreonine. Tyr15 is modified (phosphotyrosine). Asp127 serves as the catalytic Proton acceptor. Thr161 carries the post-translational modification Phosphothreonine; by CAK.

This sequence belongs to the protein kinase superfamily. CMGC Ser/Thr protein kinase family. CDC2/CDKX subfamily. Post-translationally, phosphorylated at Thr-161 by CDKD-1. As to expression, expressed in the dividing region of the root apex and in differentiated cells such as those in the sclerenchyma, pericycle and parenchyma of the central cylinder.

The enzyme catalyses L-seryl-[protein] + ATP = O-phospho-L-seryl-[protein] + ADP + H(+). It carries out the reaction L-threonyl-[protein] + ATP = O-phospho-L-threonyl-[protein] + ADP + H(+). The catalysed reaction is [DNA-directed RNA polymerase] + ATP = phospho-[DNA-directed RNA polymerase] + ADP + H(+). This chain is Cyclin-dependent kinase A-1 (CDKA-1), found in Oryza sativa subsp. japonica (Rice).